The primary structure comprises 253 residues: MSETITEVTRAEYCAIACADIFSGAGEIMASPMATLPLIGARLARLTTEPDLLITDGEALIFADTPAVGAKAPIEGWMPFRKVFDVVASGRRHVVMGANQIDRHGNQNLSAFGPLQQPTRQMFGVRGAPGNTINHPTSYWVGKHTSRVFCDTVDIVSGVGYDQIDPENPAYRFHHLHRVVSNLGVFDFGGPDHTFRALSLHPGVTADQVADNTSFEVAGLADAGVTREPTDEELRLIREVLDPRSLRDREVSV.

It belongs to the 3-oxoacid CoA-transferase subunit B family. Heterotetramer composed of 2 IpdA subunits and 2 IpdB subunits.

The catalysed reaction is (3E)-2-(2-carboxylatoethyl)-3-methyl-6-oxocyclohex-1-ene-1-carboxyl-CoA + H2O = 6-methyl-3,7-dioxodecanedioyl-CoA. It participates in steroid metabolism; cholesterol degradation. Involved in the final steps of cholesterol and steroid degradation. Opens the last steroid ring of cholesterol by catalyzing the hydrolysis of (3E)-2-(2-carboxylatoethyl)-3-methyl-6-oxocyclohex-1-ene-1-carboxyl-CoA (COCHEA-CoA) to 6-methyl-3,7-dioxodecanedioyl-CoA (MeDODA-CoA). This chain is Cholesterol ring-cleaving hydrolase IpdB subunit, found in Rhodococcus jostii (strain RHA1).